The primary structure comprises 343 residues: Transmembrane protein 120A (343 aa).

At 1 to 132 (MQPPPPGPLG…KQAKFAYKDE (132 aa)) the chain is on the cytoplasmic side. Lys130 provides a ligand contact to CoA. Residues 133-152 (YEKFKLYLTIILILISFTCR) traverse the membrane as a helical segment. The Extracellular portion of the chain corresponds to 153-158 (FLLNSR). The helical transmembrane segment at 159-177 (VTDAAFNFLLVWYYCTLTI) threads the bilayer. Over 178 to 190 (RESILINNGSRIK) the chain is Cytoplasmic. Ser187 and Arg188 together coordinate CoA. The helical transmembrane segment at 191–209 (GWWVFHHYVSTFLSGVMLT) threads the bilayer. The Extracellular portion of the chain corresponds to 210-218 (WPDGLMYQK). A helical membrane pass occupies residues 219 to 240 (FRNQFLSFSMYQSFVQFLQYYY). The CoA site is built by Gln237, Tyr240, Gln241, and His283. At 241 to 270 (QSGCLYRLRALGERHTMDLTVEGFQSWMWR) the chain is on the cytoplasmic side. The chain crosses the membrane as a helical span at residues 271–294 (GLTFLLPFLFFGHFWQLFNALTLF). The Extracellular segment spans residues 295 to 304 (NLAQDPQCKE). A helical transmembrane segment spans residues 305 to 330 (WQVLMCGFPFLLLFLGNFFTTLRVVH). Residues 331-343 (HKFHSQRHGSKKD) lie on the Cytoplasmic side of the membrane. Residue Lys332 coordinates CoA.

The protein belongs to the TMEM120 family. Homodimer. Forms heterooligomer with TMEM120B. Interacts with PKD2; TMEM120A inhibits PKD2 channel activity through the physical association of PKD2 with TMEM120A. Interacts (via C-terminal domain) with STING1; regulates the trafficking of STING1 from the ER to the ER-Golgi intermediate compartment to elicit antiviral effects. In terms of tissue distribution, expressed in nociceptors.

The protein localises to the cell membrane. Its subcellular location is the nucleus inner membrane. It localises to the endoplasmic reticulum. In terms of biological role, multifunctional protein involved in mechanosensation, and plays an essential role in lipid metabolism and adipocyte differentiation. May function as a potential ion channel involved in sensing mechanical stimuli. Mediates the mechanosensitivity of the PKD2-TMEM120A channel complex through direct physical interaction. TMEM120A seems to affect mechanosensation by inhibiting PIEZO2 channels, possibly by altering cellular lipid content. TMEM120A is structurally similar to a lipid-modifying enzyme, ELOVL7, and contains a bound coenzyme A molecule, which suggests it might function as an enzyme in lipid metabolism. Additionnaly, implicated in innate immune response against Zika virus. Acts as a key activator of the antiviral signaling involving STING1. This is Transmembrane protein 120A from Homo sapiens (Human).